Here is a 734-residue protein sequence, read N- to C-terminus: Photosystem I P700 chlorophyll a apoprotein A2 (734 aa).

8 helical membrane-spanning segments follow: residues 46–69 (IFAS…FHVA), 135–158 (LYTG…LHLQ), 175–199 (LNHH…HVAI), 273–291 (IAHH…GHMY), 330–353 (LHFQ…QHMY), 369–395 (AALY…ILVI), 417–439 (AIIS…LYVH), and 517–535 (FLVH…LILV). [4Fe-4S] cluster is bound by residues C559 and C568. 2 helical membrane passes run 575 to 596 (AFYL…YWHW) and 643 to 665 (LSVW…MFLI). Chlorophyll a-binding residues include H654, M662, and Y670. W671 serves as a coordination point for phylloquinone. A helical transmembrane segment spans residues 707-727 (LVGLAHFSVGYIFTYAAFLIA).

The protein belongs to the PsaA/PsaB family. The PsaA/B heterodimer binds the P700 chlorophyll special pair and subsequent electron acceptors. PSI consists of a core antenna complex that captures photons, and an electron transfer chain that converts photonic excitation into a charge separation. The eukaryotic PSI reaction center is composed of at least 11 subunits. The cofactor is P700 is a chlorophyll a/chlorophyll a' dimer, A0 is one or more chlorophyll a, A1 is one or both phylloquinones and FX is a shared 4Fe-4S iron-sulfur center..

It localises to the plastid. Its subcellular location is the chloroplast thylakoid membrane. The catalysed reaction is reduced [plastocyanin] + hnu + oxidized [2Fe-2S]-[ferredoxin] = oxidized [plastocyanin] + reduced [2Fe-2S]-[ferredoxin]. Functionally, psaA and PsaB bind P700, the primary electron donor of photosystem I (PSI), as well as the electron acceptors A0, A1 and FX. PSI is a plastocyanin-ferredoxin oxidoreductase, converting photonic excitation into a charge separation, which transfers an electron from the donor P700 chlorophyll pair to the spectroscopically characterized acceptors A0, A1, FX, FA and FB in turn. Oxidized P700 is reduced on the lumenal side of the thylakoid membrane by plastocyanin. The chain is Photosystem I P700 chlorophyll a apoprotein A2 from Atropa belladonna (Belladonna).